We begin with the raw amino-acid sequence, 298 residues long: Lipoyl synthase (298 aa).

[4Fe-4S] cluster is bound by residues Cys-40, Cys-45, Cys-51, Cys-67, Cys-71, Cys-74, and Ser-280. Residues 53 to 269 (AVRKTATFMI…KEIALSKGFS (217 aa)) enclose the Radical SAM core domain.

The protein belongs to the radical SAM superfamily. Lipoyl synthase family. It depends on [4Fe-4S] cluster as a cofactor.

It localises to the cytoplasm. It carries out the reaction [[Fe-S] cluster scaffold protein carrying a second [4Fe-4S](2+) cluster] + N(6)-octanoyl-L-lysyl-[protein] + 2 oxidized [2Fe-2S]-[ferredoxin] + 2 S-adenosyl-L-methionine + 4 H(+) = [[Fe-S] cluster scaffold protein] + N(6)-[(R)-dihydrolipoyl]-L-lysyl-[protein] + 4 Fe(3+) + 2 hydrogen sulfide + 2 5'-deoxyadenosine + 2 L-methionine + 2 reduced [2Fe-2S]-[ferredoxin]. It functions in the pathway protein modification; protein lipoylation via endogenous pathway; protein N(6)-(lipoyl)lysine from octanoyl-[acyl-carrier-protein]. Catalyzes the radical-mediated insertion of two sulfur atoms into the C-6 and C-8 positions of the octanoyl moiety bound to the lipoyl domains of lipoate-dependent enzymes, thereby converting the octanoylated domains into lipoylated derivatives. This is Lipoyl synthase from Bacillus cereus (strain ATCC 10987 / NRS 248).